A 101-amino-acid polypeptide reads, in one-letter code: Small ribosomal subunit protein uS14 (101 aa).

Belongs to the universal ribosomal protein uS14 family. As to quaternary structure, part of the 30S ribosomal subunit. Contacts proteins S3 and S10.

Its function is as follows. Binds 16S rRNA, required for the assembly of 30S particles and may also be responsible for determining the conformation of the 16S rRNA at the A site. This chain is Small ribosomal subunit protein uS14, found in Enterobacter sp. (strain 638).